A 455-amino-acid polypeptide reads, in one-letter code: Probable glycine dehydrogenase (decarboxylating) subunit 1 (455 aa).

This sequence belongs to the GcvP family. N-terminal subunit subfamily. The glycine cleavage system is composed of four proteins: P, T, L and H. In this organism, the P 'protein' is a heterodimer of two subunits.

It carries out the reaction N(6)-[(R)-lipoyl]-L-lysyl-[glycine-cleavage complex H protein] + glycine + H(+) = N(6)-[(R)-S(8)-aminomethyldihydrolipoyl]-L-lysyl-[glycine-cleavage complex H protein] + CO2. The glycine cleavage system catalyzes the degradation of glycine. The P protein binds the alpha-amino group of glycine through its pyridoxal phosphate cofactor; CO(2) is released and the remaining methylamine moiety is then transferred to the lipoamide cofactor of the H protein. The polypeptide is Probable glycine dehydrogenase (decarboxylating) subunit 1 (Francisella tularensis subsp. holarctica (strain LVS)).